The primary structure comprises 228 residues: Probable U3 small nucleolar RNA-associated protein 11 (228 aa).

2 disordered regions span residues 1-23 and 192-211; these read MSSL…EARK and SMQK…DDEL. Positions 12 to 23 are enriched in basic and acidic residues; the sequence is AHKERSQPEARK.

Belongs to the UTP11 family. In terms of assembly, component of the ribosomal small subunit (SSU) processome.

Its subcellular location is the nucleus. The protein localises to the nucleolus. Involved in nucleolar processing of pre-18S ribosomal RNA. This chain is Probable U3 small nucleolar RNA-associated protein 11, found in Arabidopsis thaliana (Mouse-ear cress).